We begin with the raw amino-acid sequence, 380 residues long: D-alanine--D-alanine ligase (380 aa).

The region spanning 142–348 (KQVLTAHGIR…YADLIDRLIE (207 aa)) is the ATP-grasp domain. Position 172 to 227 (172 to 227 (QSRLGDNVFIKPANQGSSVGIHKASNVQEYLDGVADAFRYDYKVLVEQTIDGPQEV)) interacts with ATP. Asp-302, Glu-315, and Asn-317 together coordinate Mg(2+).

Belongs to the D-alanine--D-alanine ligase family. The cofactor is Mg(2+). Requires Mn(2+) as cofactor.

Its subcellular location is the cytoplasm. It carries out the reaction 2 D-alanine + ATP = D-alanyl-D-alanine + ADP + phosphate + H(+). The protein operates within cell wall biogenesis; peptidoglycan biosynthesis. Its function is as follows. Cell wall formation. The sequence is that of D-alanine--D-alanine ligase from Levilactobacillus brevis (strain ATCC 367 / BCRC 12310 / CIP 105137 / JCM 1170 / LMG 11437 / NCIMB 947 / NCTC 947) (Lactobacillus brevis).